A 444-amino-acid polypeptide reads, in one-letter code: Methylenetetrahydrofolate--tRNA-(uracil-5-)-methyltransferase TrmFO (444 aa).

10–15 (GAGLAG) provides a ligand contact to FAD.

Belongs to the MnmG family. TrmFO subfamily. It depends on FAD as a cofactor.

It localises to the cytoplasm. The enzyme catalyses uridine(54) in tRNA + (6R)-5,10-methylene-5,6,7,8-tetrahydrofolate + NADH + H(+) = 5-methyluridine(54) in tRNA + (6S)-5,6,7,8-tetrahydrofolate + NAD(+). It catalyses the reaction uridine(54) in tRNA + (6R)-5,10-methylene-5,6,7,8-tetrahydrofolate + NADPH + H(+) = 5-methyluridine(54) in tRNA + (6S)-5,6,7,8-tetrahydrofolate + NADP(+). Its function is as follows. Catalyzes the folate-dependent formation of 5-methyl-uridine at position 54 (M-5-U54) in all tRNAs. The chain is Methylenetetrahydrofolate--tRNA-(uracil-5-)-methyltransferase TrmFO from Streptococcus equi subsp. zooepidemicus (strain H70).